Reading from the N-terminus, the 189-residue chain is dCTP deaminase (189 aa).

DCTP contacts are provided by residues 112-117 (KSTYAR), 136-138 (TLE), Q157, Y171, and Q181. The Proton donor/acceptor role is filled by E138.

The protein belongs to the dCTP deaminase family. Homotrimer.

The enzyme catalyses dCTP + H2O + H(+) = dUTP + NH4(+). Its pathway is pyrimidine metabolism; dUMP biosynthesis; dUMP from dCTP (dUTP route): step 1/2. Functionally, catalyzes the deamination of dCTP to dUTP. This is dCTP deaminase from Albidiferax ferrireducens (strain ATCC BAA-621 / DSM 15236 / T118) (Rhodoferax ferrireducens).